Consider the following 1265-residue polypeptide: MASSSSSIFTGVKFSPILAPFNSGDSRRSRYLKDSRNKVRFNPSSPRLTPHRVRVEAPSLIPYNGLWAAQPNSHKGRLKRNIVSGKEATGISLSQGRNFCLTCKRNQAGIRRALPSAFVDRTAFSLSRSSLTSSLRKHSQIVNATLGPDEPHAAGTAWPDGIVAERQDLDLLPPEIDSAELEAFLGCELPSHPKLHRGQLKNGLRYLILPNKVPPNRFEAHMEVHVGSIDEEEDEQGIAHMIEHVAFLGSKKREKLLGTGARSNAYTDFHHTVFHIHSPTHTKDSEDDLFPSVLDALNEIAFHPKFLSSRVEKERRAILSELQMMNTIEYRVDCQLLQHLHSENKLGRRFPIGLEEQIKKWDVDKIRKFHERWYFPANATLYIVGDIDNIPRIVHNIEAVFGKNGLDNESTPSSPSPGAFGAMANFLVPKLPAGLGGTFSNEKTNTADQSKMIKRERHAIRPPVEHNWSLPGTSVDLKPPQIFKHELLQNFAINMFCKIPVSKVQTFGDLRNVLMKRIFLSALHFRINTRYKSSNPPFTSVELDHSDSGREGCTVTTLTVTAEPQNWQNAVKVAVQEVRRLKEFGVTRGELTRYMDALLKDSEHLAAMIDNVSSVDNLDFIMESDALSHTVMDQTQGHETLVAVAGTVTLEEVNTVGAKVLEFISDFGRPTAPLPAAIVACVPTKVHVDGVGESDFNISPDEIIESVKSGLLAPIEAEPELEVPKELISQSQLKELTLQRNPCFVPIPGSGLTKLHDKETGITQLRLSNGIAVNYKKSTTESRAGVMRLIVGGGRAAETSDSKGAVVVGVRTLSEGGRVGDFSREQVELFCVNHLINCSLESTEEFIAMEFRFTLRDNGMQAAFQLLHMVLERSVWLEDAFDRARQLYLSYFRSIPKSLERATAHKLMIAMLNGDERFVEPTPKSLQSLNLESVKDAVMSHFVGDNMEVSIVGDFSEEEIERCILDYLGTVKASHDSAKPPGSEPILFRQPTAGLQFQQVFLKDTDERACAYIAGPAPNRWGFTVDGDDLFQSVSKLPVAHDGLLKSEEQLLEGGDRELQKKLRAHPLFFGVTMGLLAEIINSRLFTTVRDSLGLTYDVSFELNLFDRLNLGWYVISVTSTPGKVYKAVDACKSVLRGLHSNQIAPRELDRAKRTLLMRHEAELKSNAYWLNLLAHLQASSVPRKELSCIKELVSLYEAASIEDIYLAYNQLRVDEDSLYSCIGIAGAQAGEEITVLSEEEEPEDVFSGVVPVGRGSSMTTRPTT.

A chloroplast-targeting transit peptide spans 1-143; it reads MASSSSSIFT…SLRKHSQIVN (143 aa). Residue histidine 240 participates in Zn(2+) binding. The active-site Proton acceptor is glutamate 243. Residue histidine 244 participates in Zn(2+) binding. Glutamate 314 is an active-site residue. Residue glutamate 321 coordinates Zn(2+).

It belongs to the peptidase M16 family. Requires Zn(2+) as cofactor.

It is found in the plastid. It localises to the chloroplast stroma. Its function is as follows. Cleaves presequences (transit peptides) from chloroplastic protein precursors. Initially recognizes a precursor by binding to the C-terminus of its transit peptide and then removes the transit peptide in a single endoproteolytic step. In a next step, pursues the cleavage of transit peptide to a subfragment form. This is Stromal processing peptidase, chloroplastic from Arabidopsis thaliana (Mouse-ear cress).